The chain runs to 342 residues: Pyridoxal 4-dehydrogenase (342 aa).

D56 is an active-site residue. The Proton donor role is filled by Y61. K86 is an active-site residue. 245–255 is an NADP(+) binding site; the sequence is GVFNSGILAAP.

Belongs to the aldo/keto reductase family. Homodimer.

The enzyme catalyses pyridoxal + NAD(+) = 4-pyridoxolactone + NADH + H(+). The protein operates within cofactor degradation; B6 vitamer degradation; 4-pyridoxate from pyridoxal: step 1/2. This chain is Pyridoxal 4-dehydrogenase (pld1), found in Microbacterium luteolum (Aureobacterium luteolum).